The chain runs to 387 residues: 3-ketoacyl-CoA thiolase (387 aa).

The active-site Acyl-thioester intermediate is the C91. Catalysis depends on proton acceptor residues H343 and C373.

This sequence belongs to the thiolase-like superfamily. Thiolase family. Heterotetramer of two alpha chains (FadB) and two beta chains (FadA).

The protein localises to the cytoplasm. The enzyme catalyses an acyl-CoA + acetyl-CoA = a 3-oxoacyl-CoA + CoA. Its pathway is lipid metabolism; fatty acid beta-oxidation. Functionally, catalyzes the final step of fatty acid oxidation in which acetyl-CoA is released and the CoA ester of a fatty acid two carbons shorter is formed. The chain is 3-ketoacyl-CoA thiolase from Escherichia coli (strain UTI89 / UPEC).